The chain runs to 158 residues: Transcription factor BTF3 homolog 4 (158 aa).

Residues 33–98 (TADDKKLQSS…AETKQLTEML (66 aa)) enclose the NAC-A/B domain. The segment at 125 to 158 (LDNKAPKAEDIDEEDDDVPDLVENFDEASKNEAN) is disordered. Acidic residues predominate over residues 134 to 150 (DIDEEDDDVPDLVENFD).

Belongs to the NAC-beta family.

The chain is Transcription factor BTF3 homolog 4 (btf3l4) from Danio rerio (Zebrafish).